We begin with the raw amino-acid sequence, 145 residues long: Large ribosomal subunit protein uL15 (145 aa).

The tract at residues 1-52 (MRLNTLSPAAGSKRVKHRPGRGIGSGLGKTGGRGVKGQTSRSGGGKVRNGFE) is disordered. 2 stretches are compositionally biased toward gly residues: residues 21–35 (RGIGSGLGKTGGRGV) and 42–52 (SGGGKVRNGFE).

The protein belongs to the universal ribosomal protein uL15 family. Part of the 50S ribosomal subunit.

Its function is as follows. Binds to the 23S rRNA. The sequence is that of Large ribosomal subunit protein uL15 from Aeromonas hydrophila subsp. hydrophila (strain ATCC 7966 / DSM 30187 / BCRC 13018 / CCUG 14551 / JCM 1027 / KCTC 2358 / NCIMB 9240 / NCTC 8049).